The following is a 103-amino-acid chain: Small ribosomal subunit protein uS10 (103 aa).

It belongs to the universal ribosomal protein uS10 family. Part of the 30S ribosomal subunit.

Involved in the binding of tRNA to the ribosomes. This Persephonella marina (strain DSM 14350 / EX-H1) protein is Small ribosomal subunit protein uS10.